The sequence spans 65 residues: Alpha-toxin BeM10 (65 aa).

In terms of domain architecture, LCN-type CS-alpha/beta spans 2-65 (RDGYIADDKD…IKQKVSGKCN (64 aa)). Disulfide bonds link Cys12-Cys64, Cys16-Cys35, Cys22-Cys45, and Cys26-Cys47.

This sequence belongs to the long (4 C-C) scorpion toxin superfamily. Sodium channel inhibitor family. Alpha subfamily. Expressed by the venom gland.

It is found in the secreted. Its function is as follows. Alpha toxins bind voltage-independently at site-3 of sodium channels (Nav) and inhibit the inactivation of the activated channels, thereby blocking neuronal transmission. Has paralytic activity in mice. This chain is Alpha-toxin BeM10, found in Mesobuthus eupeus (Lesser Asian scorpion).